Consider the following 608-residue polypeptide: Threonine--tRNA ligase (608 aa).

Residues M1–E143 are editing domain. Catalytic regions lie at residues P194–P490 and K195–P490. Residues C287, H338, and H459 each coordinate Zn(2+).

The protein belongs to the class-II aminoacyl-tRNA synthetase family. As to quaternary structure, homodimer. It depends on Zn(2+) as a cofactor.

The protein resides in the cytoplasm. The catalysed reaction is tRNA(Thr) + L-threonine + ATP = L-threonyl-tRNA(Thr) + AMP + diphosphate + H(+). In terms of biological role, catalyzes the attachment of threonine to tRNA(Thr) in a two-step reaction: L-threonine is first activated by ATP to form Thr-AMP and then transferred to the acceptor end of tRNA(Thr). Also edits incorrectly charged L-seryl-tRNA(Thr). In Pyrobaculum arsenaticum (strain DSM 13514 / JCM 11321 / PZ6), this protein is Threonine--tRNA ligase.